The primary structure comprises 134 residues: Small ribosomal subunit protein uS8c (134 aa).

The protein belongs to the universal ribosomal protein uS8 family. Part of the 30S ribosomal subunit.

It is found in the plastid. It localises to the chloroplast. Functionally, one of the primary rRNA binding proteins, it binds directly to 16S rRNA central domain where it helps coordinate assembly of the platform of the 30S subunit. This chain is Small ribosomal subunit protein uS8c (rps8), found in Eucalyptus globulus subsp. globulus (Tasmanian blue gum).